The following is an 828-amino-acid chain: Glycerol-3-phosphate acyltransferase 1, mitochondrial (828 aa).

Over 1–87 the chain is Cytoplasmic; sequence MEESSVTIGT…FFNPSIPSLG (87 aa). The tract at residues 80-120 is important for mitochondrial localization; sequence NPSIPSLGLRNVIYINETHTRHRGWLARRLSYILFVQERDV. Residues 88-118 lie within the membrane without spanning it; the sequence is LRNVIYINETHTRHRGWLARRLSYILFVQER. Over 119–828 the chain is Cytoplasmic; it reads DVHKGMFATS…LEYILSFVVL (710 aa). The short motif at 230–235 is the HXXXXD motif element; it reads HRSHID. Residues R278, R279, K288, R293, and R328 each contribute to the CoA site. At S380 the chain carries Phosphoserine. R462 is a binding site for CoA. Residues S688 and S695 each carry the phosphoserine modification. 2 positions are modified to N6-acetyllysine: K780 and K784.

This sequence belongs to the GPAT/DAPAT family.

The protein resides in the mitochondrion outer membrane. It carries out the reaction sn-glycerol 3-phosphate + an acyl-CoA = a 1-acyl-sn-glycero-3-phosphate + CoA. The catalysed reaction is sn-glycerol 3-phosphate + hexadecanoyl-CoA = 1-hexadecanoyl-sn-glycero-3-phosphate + CoA. It catalyses the reaction (9Z,12Z)-octadecadienoyl-CoA + sn-glycerol 3-phosphate = 1-(9Z,12Z)-octadecadienoyl-sn-glycero-3-phosphate + CoA. The enzyme catalyses sn-glycerol 3-phosphate + (9Z)-octadecenoyl-CoA = 1-(9Z-octadecenoyl)-sn-glycero-3-phosphate + CoA. It carries out the reaction sn-glycerol 3-phosphate + octadecanoyl-CoA = 1-octadecanoyl-sn-glycero-3-phosphate + CoA. The catalysed reaction is dodecanoyl-CoA + sn-glycerol 3-phosphate = 1-dodecanoyl-sn-glycerol 3-phosphate + CoA. It catalyses the reaction 1-acyl-sn-glycero-3-phospho-(1'-sn-glycerol) + an acyl-CoA = a 1,2-diacyl-sn-glycero-3-phospho-(1'-sn-glycerol) + CoA. Its pathway is phospholipid metabolism; CDP-diacylglycerol biosynthesis; CDP-diacylglycerol from sn-glycerol 3-phosphate: step 1/3. Its function is as follows. Mitochondrial membrane protein that catalyzes the essential first step of biosynthesis of glycerolipids such as triglycerides, phosphatidic acids and lysophosphatidic acids. Esterifies acyl-group from acyl-coenzyme A (acyl-CoA) to the sn-1 position of glycerol-3-phosphate, to produce lysophosphatidic acid. Has a narrow hydrophobic binding cleft that selects for a linear acyl chain. Catalytic activity is higher for substrates with a 16-carbon acyl chain. This chain is Glycerol-3-phosphate acyltransferase 1, mitochondrial, found in Rattus norvegicus (Rat).